The sequence spans 85 residues: MLKWSTLCFRFVRAMQQALFLTIFFHMQIFCIAFTYNSTFKCSLITTSSLTCYKVLSTLYTQNSSKVYSTESTLYLFLNLSSTGF.

This is an uncharacterized protein from Saimiriine herpesvirus 2 (strain 488) (SaHV-2).